A 100-amino-acid chain; its full sequence is Aspartyl/glutamyl-tRNA(Asn/Gln) amidotransferase subunit C (100 aa).

The protein belongs to the GatC family. Heterotrimer of A, B and C subunits.

It carries out the reaction L-glutamyl-tRNA(Gln) + L-glutamine + ATP + H2O = L-glutaminyl-tRNA(Gln) + L-glutamate + ADP + phosphate + H(+). It catalyses the reaction L-aspartyl-tRNA(Asn) + L-glutamine + ATP + H2O = L-asparaginyl-tRNA(Asn) + L-glutamate + ADP + phosphate + 2 H(+). Allows the formation of correctly charged Asn-tRNA(Asn) or Gln-tRNA(Gln) through the transamidation of misacylated Asp-tRNA(Asn) or Glu-tRNA(Gln) in organisms which lack either or both of asparaginyl-tRNA or glutaminyl-tRNA synthetases. The reaction takes place in the presence of glutamine and ATP through an activated phospho-Asp-tRNA(Asn) or phospho-Glu-tRNA(Gln). This chain is Aspartyl/glutamyl-tRNA(Asn/Gln) amidotransferase subunit C, found in Staphylococcus saprophyticus subsp. saprophyticus (strain ATCC 15305 / DSM 20229 / NCIMB 8711 / NCTC 7292 / S-41).